The primary structure comprises 73 residues: MAFMKKSLFLVLFLGMVSLSICEEEKRENEDEAKQEDDEQSEMKRGLWSTIKNVGKEAAIAAGKAALGALGEQ.

A signal peptide spans 1–22 (MAFMKKSLFLVLFLGMVSLSIC). The propeptide occupies 23–43 (EEEKRENEDEAKQEDDEQSEM). The interval 25–45 (EKRENEDEAKQEDDEQSEMKR) is disordered. Residues 30-40 (EDEAKQEDDEQ) are compositionally biased toward acidic residues. Leucine amide is present on L70. The propeptide occupies 72-73 (EQ).

Expressed by the skin glands.

The protein resides in the secreted. In terms of biological role, has antibacterial activity against the Gram-negative bacteria E.coli ATCC 11775 (MIC=0.8 uM), and the Gram-positive bacteria S.aureus ATCC 12600 (MIC=0.4 uM) and M.luteus ATCC 49732 (MIC=0.8 uM). Does not inhibit the growth of the fungus C.albicans. Probably acts by disturbing membrane functions with its amphipathic structure. The sequence is that of Dermaseptin-H4 from Pithecopus azureus (Orange-legged monkey tree frog).